The chain runs to 448 residues: Putative diacyglycerol O-acyltransferase MT3848 (448 aa).

The active-site Proton acceptor is His136.

The protein belongs to the long-chain O-acyltransferase family.

It catalyses the reaction an acyl-CoA + a 1,2-diacyl-sn-glycerol = a triacyl-sn-glycerol + CoA. The protein operates within glycerolipid metabolism; triacylglycerol biosynthesis. This Mycobacterium tuberculosis (strain CDC 1551 / Oshkosh) protein is Putative diacyglycerol O-acyltransferase MT3848.